Consider the following 322-residue polypeptide: GTP 3',8-cyclase (322 aa).

One can recognise a Radical SAM core domain in the interval 5-217 (SYGRVVDYLR…DIISKKYNIK (213 aa)). Arg14 provides a ligand contact to GTP. The [4Fe-4S] cluster site is built by Cys21 and Cys25. An S-adenosyl-L-methionine-binding site is contributed by Tyr27. Position 28 (Cys28) interacts with [4Fe-4S] cluster. Residue Arg64 coordinates GTP. Gly68 contributes to the S-adenosyl-L-methionine binding site. A GTP-binding site is contributed by Thr95. Ser119 lines the S-adenosyl-L-methionine pocket. GTP is bound at residue Lys155. Residue Met189 participates in S-adenosyl-L-methionine binding. [4Fe-4S] cluster-binding residues include Cys249 and Cys252. 254 to 256 (RLR) contributes to the GTP binding site. Cys266 provides a ligand contact to [4Fe-4S] cluster.

The protein belongs to the radical SAM superfamily. MoaA family. In terms of assembly, monomer and homodimer. It depends on [4Fe-4S] cluster as a cofactor.

The catalysed reaction is GTP + AH2 + S-adenosyl-L-methionine = (8S)-3',8-cyclo-7,8-dihydroguanosine 5'-triphosphate + 5'-deoxyadenosine + L-methionine + A + H(+). It participates in cofactor biosynthesis; molybdopterin biosynthesis. Catalyzes the cyclization of GTP to (8S)-3',8-cyclo-7,8-dihydroguanosine 5'-triphosphate. The chain is GTP 3',8-cyclase from Campylobacter fetus subsp. fetus (strain 82-40).